The primary structure comprises 665 residues: ELMO family protein LMO1 (665 aa).

As to quaternary structure, forms an active heterodimer with DCK1.

It localises to the cytoplasm. The protein resides in the mitochondrion. Forms a transiant heterodimeric complex with DCK1, that acts as a guanine nucleotide exchange factor (GEF) for the small GTPase RHO5. DCK1, LMO1 and RHO5 relocate to mitochondria upon oxidative stress and trigger cell death. The DCK1/LMO1/RHO5 signaling module mediates mitochondrial turnover under nitrogen starvation conditions via mitophagy. The DCK1/LMO1/RHO5 signaling module also plays a role in cell wall integrity signaling. The sequence is that of ELMO family protein LMO1 from Saccharomyces cerevisiae (strain ATCC 204508 / S288c) (Baker's yeast).